A 387-amino-acid polypeptide reads, in one-letter code: Putative transposase y4pF/y4sB (387 aa).

It belongs to the transposase 20 family.

The sequence is that of Putative transposase y4pF/y4sB from Sinorhizobium fredii (strain NBRC 101917 / NGR234).